The sequence spans 172 residues: Stellate protein CG33238 (172 aa).

It belongs to the casein kinase 2 subunit beta family. Interacts in vitro with the casein kinase 2 alpha subunit (CkII-alpha). The relevance of such interaction is however unclear in vivo. As to expression, probably not expressed in wild-type flies. In males lacking the Y chromosome, it is testis-specific and constitutes the main component of star-shaped crystals.

Unknown. In males lacking the Y chromosome, its strong overexpression leads to the appearance of proteinaceous star-shaped crystals in the primary spermatocytes causing meiotic drive, possibly by interfering with normal casein kinase 2 activity. This chain is Stellate protein CG33238 (Ste:CG33238), found in Drosophila melanogaster (Fruit fly).